Consider the following 453-residue polypeptide: Ribosomal protein uS12 methylthiotransferase RimO (453 aa).

The MTTase N-terminal domain maps to 5–120; the sequence is PKVGFVSLGC…VMQAVHSHLP (116 aa). Positions 14, 50, 79, 151, 155, and 158 each coordinate [4Fe-4S] cluster. In terms of domain architecture, Radical SAM core spans 137 to 382; that stretch reads LTPRHYAYLK…MEVAEEVSAN (246 aa). Residues 385–453 enclose the TRAM domain; it reads QRKIGKTLKV…ADGHDLWGEV (69 aa).

This sequence belongs to the methylthiotransferase family. RimO subfamily. [4Fe-4S] cluster serves as cofactor.

Its subcellular location is the cytoplasm. It catalyses the reaction L-aspartate(89)-[ribosomal protein uS12]-hydrogen + (sulfur carrier)-SH + AH2 + 2 S-adenosyl-L-methionine = 3-methylsulfanyl-L-aspartate(89)-[ribosomal protein uS12]-hydrogen + (sulfur carrier)-H + 5'-deoxyadenosine + L-methionine + A + S-adenosyl-L-homocysteine + 2 H(+). Catalyzes the methylthiolation of an aspartic acid residue of ribosomal protein uS12. This Burkholderia orbicola (strain MC0-3) protein is Ribosomal protein uS12 methylthiotransferase RimO.